The sequence spans 315 residues: Methionyl-tRNA formyltransferase (315 aa).

113–116 (SLLP) lines the (6S)-5,6,7,8-tetrahydrofolate pocket.

The protein belongs to the Fmt family.

The enzyme catalyses L-methionyl-tRNA(fMet) + (6R)-10-formyltetrahydrofolate = N-formyl-L-methionyl-tRNA(fMet) + (6S)-5,6,7,8-tetrahydrofolate + H(+). Attaches a formyl group to the free amino group of methionyl-tRNA(fMet). The formyl group appears to play a dual role in the initiator identity of N-formylmethionyl-tRNA by promoting its recognition by IF2 and preventing the misappropriation of this tRNA by the elongation apparatus. The chain is Methionyl-tRNA formyltransferase from Yersinia enterocolitica serotype O:8 / biotype 1B (strain NCTC 13174 / 8081).